The chain runs to 712 residues: Aryl hydrocarbon receptor nuclear translocator 2 (712 aa).

The interval 36–73 (AGAMPARGGKRRSGMDFDDEDGEGPSKFSRENHSEIER) is disordered. The residue at position 42 (arginine 42) is an Omega-N-methylarginine. Positions 63-73 (FSRENHSEIER) are enriched in basic and acidic residues. The bHLH domain occupies 63–116 (FSRENHSEIERRRRNKMTQYITELSDMVPTCSALARKPDKLTILRMAVSHMKSM). PAS domains are found at residues 134-209 (TEQE…MTGR) and 323-393 (PVCM…VKLK). The PAC domain occupies 398 to 441 (SVMYRFRTKNREWLLIRTSSFTFQNPYSDEIEYVICTNTNVKQL). The tract at residues 573–712 (AWTGSRPPFP…DLGMFPPFSE (140 aa)) is disordered. 2 stretches are compositionally biased toward low complexity: residues 597 to 626 (SSHPYPADPSSYSPLSSPAASSPSGNAYPS) and 653 to 675 (SQWQSQHHGQQSGEQHSHQQPGQ).

In terms of assembly, efficient DNA binding requires dimerization with another bHLH protein. Heterodimer with NPAS4 or SIM1. Heterodimer with the aryl hydrocarbon receptor (AHR) or the SIM1 protein. Interacts with TACC3. In terms of tissue distribution, restricted to adult brain and kidney.

The protein resides in the nucleus. Its function is as follows. Transcription factor that plays a role in the development of the hypothalamo-pituitary axis, postnatal brain growth, and visual and renal function. Specifically recognizes the xenobiotic response element (XRE). The protein is Aryl hydrocarbon receptor nuclear translocator 2 (Arnt2) of Mus musculus (Mouse).